The following is a 549-amino-acid chain: Sorting nexin-33 (549 aa).

One can recognise an SH3 domain in the interval M1–P61. A compositionally biased stretch (polar residues) spans V66–Q83. The disordered stretch occupies residues V66 to P137. The span at Y86 to D101 shows a compositional bias: acidic residues. A compositionally biased stretch (polar residues) spans S110 to Q119. Basic and acidic residues predominate over residues P127 to P137. In terms of domain architecture, PX spans F205–Q315. In terms of domain architecture, BAR spans L346–L549.

The protein belongs to the sorting nexin family.

The protein localises to the cytoplasm. It localises to the cytosol. Its subcellular location is the membrane. The protein resides in the cytoplasmic vesicle membrane. Functionally, plays a role in the reorganization of the cytoskeleton, endocytosis and cellular vesicle trafficking, both during interphase and at the end of mitotic cell divisions. Required for efficient progress through mitosis and cytokinesis. Required for normal formation of the cleavage furrow at the end of mitosis. Modulates endocytosis of cell-surface proteins. Promotes membrane tubulation (in vitro). May promote the formation of macropinosomes. The polypeptide is Sorting nexin-33 (snx33) (Xenopus tropicalis (Western clawed frog)).